The sequence spans 520 residues: ATP synthase subunit alpha (520 aa).

ATP is bound at residue 169-176 (GDRKTGKT).

The protein belongs to the ATPase alpha/beta chains family. In terms of assembly, F-type ATPases have 2 components, CF(1) - the catalytic core - and CF(0) - the membrane proton channel. CF(1) has five subunits: alpha(3), beta(3), gamma(1), delta(1), epsilon(1). CF(0) has three main subunits: a(1), b(2) and c(9-12). The alpha and beta chains form an alternating ring which encloses part of the gamma chain. CF(1) is attached to CF(0) by a central stalk formed by the gamma and epsilon chains, while a peripheral stalk is formed by the delta and b chains.

Its subcellular location is the cell membrane. The enzyme catalyses ATP + H2O + 4 H(+)(in) = ADP + phosphate + 5 H(+)(out). Functionally, produces ATP from ADP in the presence of a proton gradient across the membrane. The alpha chain is a regulatory subunit. This Oenococcus oeni (strain ATCC BAA-331 / PSU-1) protein is ATP synthase subunit alpha.